The primary structure comprises 388 residues: Succinate--CoA ligase [ADP-forming] subunit beta (388 aa).

Positions 9 to 246 (KDILRQFGVP…FEEEDPAEVL (238 aa)) constitute an ATP-grasp domain. ATP contacts are provided by residues K46, 53 to 55 (GRG), E99, A102, and E107. N201 and D215 together coordinate Mg(2+). Residues N266 and 323–325 (GIM) contribute to the substrate site.

This sequence belongs to the succinate/malate CoA ligase beta subunit family. As to quaternary structure, heterotetramer of two alpha and two beta subunits. The cofactor is Mg(2+).

The catalysed reaction is succinate + ATP + CoA = succinyl-CoA + ADP + phosphate. It catalyses the reaction GTP + succinate + CoA = succinyl-CoA + GDP + phosphate. Its pathway is carbohydrate metabolism; tricarboxylic acid cycle; succinate from succinyl-CoA (ligase route): step 1/1. Succinyl-CoA synthetase functions in the citric acid cycle (TCA), coupling the hydrolysis of succinyl-CoA to the synthesis of either ATP or GTP and thus represents the only step of substrate-level phosphorylation in the TCA. The beta subunit provides nucleotide specificity of the enzyme and binds the substrate succinate, while the binding sites for coenzyme A and phosphate are found in the alpha subunit. In Verminephrobacter eiseniae (strain EF01-2), this protein is Succinate--CoA ligase [ADP-forming] subunit beta.